Here is a 252-residue protein sequence, read N- to C-terminus: 5-oxoprolinase subunit A (252 aa).

The protein belongs to the LamB/PxpA family. In terms of assembly, forms a complex composed of PxpA, PxpB and PxpC.

The enzyme catalyses 5-oxo-L-proline + ATP + 2 H2O = L-glutamate + ADP + phosphate + H(+). In terms of biological role, catalyzes the cleavage of 5-oxoproline to form L-glutamate coupled to the hydrolysis of ATP to ADP and inorganic phosphate. This is 5-oxoprolinase subunit A from Mycobacterium avium (strain 104).